A 128-amino-acid chain; its full sequence is Small ribosomal subunit protein bS16 (128 aa).

The disordered stretch occupies residues 107 to 128 (AAEAKAAAANESDDSGTDSTES). Residues 117-128 (ESDDSGTDSTES) show a composition bias toward acidic residues.

The protein belongs to the bacterial ribosomal protein bS16 family.

In Synechococcus sp. (strain CC9311), this protein is Small ribosomal subunit protein bS16.